The primary structure comprises 325 residues: tRNA N6-adenosine threonylcarbamoyltransferase (325 aa).

2 residues coordinate Fe cation: histidine 107 and histidine 111. Substrate is bound by residues 129–133 (LVSGG), aspartate 162, glycine 175, and asparagine 265. Aspartate 293 contributes to the Fe cation binding site.

This sequence belongs to the KAE1 / TsaD family. It depends on Fe(2+) as a cofactor.

It is found in the cytoplasm. The catalysed reaction is L-threonylcarbamoyladenylate + adenosine(37) in tRNA = N(6)-L-threonylcarbamoyladenosine(37) in tRNA + AMP + H(+). Required for the formation of a threonylcarbamoyl group on adenosine at position 37 (t(6)A37) in tRNAs that read codons beginning with adenine. Is involved in the transfer of the threonylcarbamoyl moiety of threonylcarbamoyl-AMP (TC-AMP) to the N6 group of A37, together with TsaE and TsaB. TsaD likely plays a direct catalytic role in this reaction. This is tRNA N6-adenosine threonylcarbamoyltransferase from Sulfurimonas denitrificans (strain ATCC 33889 / DSM 1251) (Thiomicrospira denitrificans (strain ATCC 33889 / DSM 1251)).